The primary structure comprises 212 residues: Transmembrane emp24 domain-containing protein p24delta7 (212 aa).

An N-terminal signal peptide occupies residues 1-22 (MNHRRSSIVLLILSILSPVTLS). Over 23–179 (IRYELLSGHT…HNLNIATNSK (157 aa)) the chain is Lumenal. One can recognise a GOLD domain in the interval 32–147 (TKCISEEIHA…VETMEFEVKK (116 aa)). The stretch at 162–175 (LRDREEEMHNLNIA) forms a coiled coil. The residue at position 165 (Arg165) is an Omega-N-methylated arginine. A helical transmembrane segment spans residues 180–200 (MAWLSFVSLAVCLSVAGLQFW). The Cytoplasmic portion of the chain corresponds to 201–212 (HLKTFFQKKKLI). A COPII vesicle coat-binding motif is present at residues 205–206 (FF). The COPI vesicle coat-binding motif lies at 205–212 (FFQKKKLI).

Belongs to the EMP24/GP25L family. Probably oligomerizes with other members of the EMP24/GP25L family. Associates with the COPI vesicle coat (coatomer). Associates with the COPII vesicle coat (coatomer).

It is found in the endoplasmic reticulum membrane. The protein localises to the golgi apparatus. The protein resides in the cis-Golgi network membrane. It localises to the golgi stack membrane. Its function is as follows. Involved in vesicular protein trafficking. Mainly functions in the early secretory pathway. Thought to act as cargo receptor at the lumenal side for incorporation of secretory cargo molecules into transport vesicles and to be involved in vesicle coat formation at the cytoplasmic side. The polypeptide is Transmembrane emp24 domain-containing protein p24delta7 (Arabidopsis thaliana (Mouse-ear cress)).